The primary structure comprises 698 residues: Polyribonucleotide nucleotidyltransferase (698 aa).

Mg(2+) contacts are provided by D485 and D491. In terms of domain architecture, KH spans 552–612 (PRVEMMTIPE…SDLKGAKSIV (61 aa)). Positions 622–690 (GMVYDGTVKK…KLGRLNLSYV (69 aa)) constitute an S1 motif domain.

This sequence belongs to the polyribonucleotide nucleotidyltransferase family. It depends on Mg(2+) as a cofactor.

The protein localises to the cytoplasm. The enzyme catalyses RNA(n+1) + phosphate = RNA(n) + a ribonucleoside 5'-diphosphate. Its function is as follows. Involved in mRNA degradation. Catalyzes the phosphorolysis of single-stranded polyribonucleotides processively in the 3'- to 5'-direction. In Treponema denticola (strain ATCC 35405 / DSM 14222 / CIP 103919 / JCM 8153 / KCTC 15104), this protein is Polyribonucleotide nucleotidyltransferase.